Here is a 336-residue protein sequence, read N- to C-terminus: Glycerol-3-phosphate dehydrogenase [NAD(P)+] (336 aa).

Residues Ser16, Tyr17, His37, and Lys111 each contribute to the NADPH site. Sn-glycerol 3-phosphate is bound by residues Lys111, Gly140, and Thr142. Ala144 contributes to the NADPH binding site. Residues Lys196, Asp249, Ser259, Arg260, and Asn261 each contribute to the sn-glycerol 3-phosphate site. The active-site Proton acceptor is Lys196. Residue Arg260 coordinates NADPH. Residues Val284 and Glu286 each coordinate NADPH.

It belongs to the NAD-dependent glycerol-3-phosphate dehydrogenase family.

Its subcellular location is the cytoplasm. It catalyses the reaction sn-glycerol 3-phosphate + NAD(+) = dihydroxyacetone phosphate + NADH + H(+). It carries out the reaction sn-glycerol 3-phosphate + NADP(+) = dihydroxyacetone phosphate + NADPH + H(+). It functions in the pathway membrane lipid metabolism; glycerophospholipid metabolism. Catalyzes the reduction of the glycolytic intermediate dihydroxyacetone phosphate (DHAP) to sn-glycerol 3-phosphate (G3P), the key precursor for phospholipid synthesis. The chain is Glycerol-3-phosphate dehydrogenase [NAD(P)+] from Actinobacillus pleuropneumoniae serotype 3 (strain JL03).